A 237-amino-acid polypeptide reads, in one-letter code: Probable septum site-determining protein MinC (237 aa).

Belongs to the MinC family. Interacts with MinD and FtsZ.

In terms of biological role, cell division inhibitor that blocks the formation of polar Z ring septums. Rapidly oscillates between the poles of the cell to destabilize FtsZ filaments that have formed before they mature into polar Z rings. Prevents FtsZ polymerization. This chain is Probable septum site-determining protein MinC, found in Buchnera aphidicola subsp. Acyrthosiphon pisum (strain 5A).